The chain runs to 575 residues: Phosphoenolpyruvate-protein phosphotransferase (575 aa).

The active-site Tele-phosphohistidine intermediate is the H189. Residues R296 and R332 each coordinate phosphoenolpyruvate. Residues E431 and D455 each contribute to the Mg(2+) site. Residues 454–455 (ND) and R465 contribute to the phosphoenolpyruvate site. Residue C502 is the Proton donor of the active site.

This sequence belongs to the PEP-utilizing enzyme family. As to quaternary structure, homodimer. Mg(2+) is required as a cofactor.

The protein localises to the cytoplasm. The catalysed reaction is L-histidyl-[protein] + phosphoenolpyruvate = N(pros)-phospho-L-histidyl-[protein] + pyruvate. In terms of biological role, general (non sugar-specific) component of the phosphoenolpyruvate-dependent sugar phosphotransferase system (sugar PTS). This major carbohydrate active-transport system catalyzes the phosphorylation of incoming sugar substrates concomitantly with their translocation across the cell membrane. Enzyme I transfers the phosphoryl group from phosphoenolpyruvate (PEP) to the phosphoryl carrier protein (HPr). The polypeptide is Phosphoenolpyruvate-protein phosphotransferase (ptsI) (Haemophilus influenzae (strain ATCC 51907 / DSM 11121 / KW20 / Rd)).